We begin with the raw amino-acid sequence, 135 residues long: Transcription antitermination protein NusB (135 aa).

Belongs to the NusB family.

Its function is as follows. Involved in transcription antitermination. Required for transcription of ribosomal RNA (rRNA) genes. Binds specifically to the boxA antiterminator sequence of the ribosomal RNA (rrn) operons. The chain is Transcription antitermination protein NusB from Shewanella halifaxensis (strain HAW-EB4).